Consider the following 471-residue polypeptide: Ubiquitin-conjugating enzyme E2 variant 3 (471 aa).

A UEV domain is found at 2–145; the sequence is DVNSEPVKKV…EEEPPLGTKS (144 aa). 183–211 provides a ligand contact to NAD(+); it reads GDLGIAAVLSIMAKSCVDKLVLIDIPENS.

In the N-terminal section; belongs to the ubiquitin-conjugating enzyme family. UEV subfamily. The protein in the C-terminal section; belongs to the LDH/MDH superfamily. Homodimer.

In terms of biological role, possible negative regulator of polyubiquitination. The sequence is that of Ubiquitin-conjugating enzyme E2 variant 3 (uevld) from Danio rerio (Zebrafish).